A 115-amino-acid chain; its full sequence is Large ribosomal subunit protein uL18 (115 aa).

It belongs to the universal ribosomal protein uL18 family. In terms of assembly, part of the 50S ribosomal subunit; part of the 5S rRNA/L5/L18/L25 subcomplex. Contacts the 5S and 23S rRNAs.

This is one of the proteins that bind and probably mediate the attachment of the 5S RNA into the large ribosomal subunit, where it forms part of the central protuberance. This is Large ribosomal subunit protein uL18 from Ruthia magnifica subsp. Calyptogena magnifica.